The chain runs to 640 residues: 1-deoxy-D-xylulose-5-phosphate synthase (640 aa).

Residues H72 and 113–115 contribute to the thiamine diphosphate site; that span reads GHA. D144 is a Mg(2+) binding site. Thiamine diphosphate-binding positions include 145 to 146, N174, Y287, and E370; that span reads GA. Residue N174 coordinates Mg(2+).

This sequence belongs to the transketolase family. DXPS subfamily. As to quaternary structure, homodimer. Mg(2+) serves as cofactor. Requires thiamine diphosphate as cofactor.

The enzyme catalyses D-glyceraldehyde 3-phosphate + pyruvate + H(+) = 1-deoxy-D-xylulose 5-phosphate + CO2. It functions in the pathway metabolic intermediate biosynthesis; 1-deoxy-D-xylulose 5-phosphate biosynthesis; 1-deoxy-D-xylulose 5-phosphate from D-glyceraldehyde 3-phosphate and pyruvate: step 1/1. Catalyzes the acyloin condensation reaction between C atoms 2 and 3 of pyruvate and glyceraldehyde 3-phosphate to yield 1-deoxy-D-xylulose-5-phosphate (DXP). This Synechococcus sp. (strain RCC307) protein is 1-deoxy-D-xylulose-5-phosphate synthase.